The chain runs to 132 residues: D-ribose pyranase (132 aa).

Histidine 20 serves as the catalytic Proton donor. Substrate-binding positions include aspartate 28, histidine 99, and 121-123 (YAN).

This sequence belongs to the RbsD / FucU family. RbsD subfamily. As to quaternary structure, homodecamer.

The protein resides in the cytoplasm. It catalyses the reaction beta-D-ribopyranose = beta-D-ribofuranose. It participates in carbohydrate metabolism; D-ribose degradation; D-ribose 5-phosphate from beta-D-ribopyranose: step 1/2. Its function is as follows. Catalyzes the interconversion of beta-pyran and beta-furan forms of D-ribose. This is D-ribose pyranase from Chromobacterium violaceum (strain ATCC 12472 / DSM 30191 / JCM 1249 / CCUG 213 / NBRC 12614 / NCIMB 9131 / NCTC 9757 / MK).